We begin with the raw amino-acid sequence, 301 residues long: MVFVKSSKSNAYFKRYQVKFRRRRDGKTDYRARIRLINQDKNKYNTPKYRFVVRFTNKDIVAQIVSASIAGDIVKASAYAHELPQYGLTVGLTNYAAAYCTGLLLARRVLKMLEMDDEYEGNVEATGEDFSVEPTDSRRPFRALLDVGLIRTTTGNRVFGALKGALDGGLDIPHSDKRFAGFHKENKQLDAEIHRNYIYGGHVSNYMKLLGEDEPEKLQTHFSAYIKKGVEAESIEEMYKKVHAAIRAEPNHKKTEKSAPKEHKRYNLKKLTYEERKNKLIERVKALNGAGGDDDDEDDEE.

The interval 247–267 (RAEPNHKKTEKSAPKEHKRYN) is disordered. Residues 249 to 261 (EPNHKKTEKSAPK) show a composition bias toward basic and acidic residues.

Belongs to the universal ribosomal protein uL18 family. In terms of assembly, component of the large ribosomal subunit (LSU).

The protein resides in the cytoplasm. The protein localises to the nucleus. It is found in the nucleolus. Its subcellular location is the nucleoplasm. Component of the ribosome, a large ribonucleoprotein complex responsible for the synthesis of proteins in the cell. The small ribosomal subunit (SSU) binds messenger RNAs (mRNAs) and translates the encoded message by selecting cognate aminoacyl-transfer RNA (tRNA) molecules. The large subunit (LSU) contains the ribosomal catalytic site termed the peptidyl transferase center (PTC), which catalyzes the formation of peptide bonds, thereby polymerizing the amino acids delivered by tRNAs into a polypeptide chain. The nascent polypeptides leave the ribosome through a tunnel in the LSU and interact with protein factors that function in enzymatic processing, targeting, and the membrane insertion of nascent chains at the exit of the ribosomal tunnel. Seems involved in the regulation of cell proliferation. Essential in leaf polarity establishment, probably having a role for translation in leaf dorsoventral patterning to specify leaf adaxial identity. The sequence is that of Large ribosomal subunit protein uL18y from Arabidopsis thaliana (Mouse-ear cress).